We begin with the raw amino-acid sequence, 291 residues long: 4-hydroxy-tetrahydrodipicolinate synthase (291 aa).

Thr-42 serves as a coordination point for pyruvate. Tyr-129 serves as the catalytic Proton donor/acceptor. Lys-157 functions as the Schiff-base intermediate with substrate in the catalytic mechanism. Residue Ile-198 coordinates pyruvate.

Belongs to the DapA family. As to quaternary structure, homotetramer; dimer of dimers.

Its subcellular location is the cytoplasm. It catalyses the reaction L-aspartate 4-semialdehyde + pyruvate = (2S,4S)-4-hydroxy-2,3,4,5-tetrahydrodipicolinate + H2O + H(+). The protein operates within amino-acid biosynthesis; L-lysine biosynthesis via DAP pathway; (S)-tetrahydrodipicolinate from L-aspartate: step 3/4. Functionally, catalyzes the condensation of (S)-aspartate-beta-semialdehyde [(S)-ASA] and pyruvate to 4-hydroxy-tetrahydrodipicolinate (HTPA). The sequence is that of 4-hydroxy-tetrahydrodipicolinate synthase from Chlamydia pneumoniae (Chlamydophila pneumoniae).